A 393-amino-acid polypeptide reads, in one-letter code: Flap endonuclease 1 (393 aa).

Residues 1–108 are N-domain; the sequence is MGVLGLSKLL…SELESRRQRA (108 aa). D34 is a Mg(2+) binding site. R74 contacts DNA. Position 90 (D90) interacts with Mg(2+). Over residues 99-120 the composition is skewed to basic and acidic residues; that stretch reads SELESRRQRAEDAKHEFEKAKE. Residues 99 to 127 form a disordered region; it reads SELESRRQRAEDAKHEFEKAKEEGDDEAM. The interval 126 to 257 is I-domain; sequence AMEKMSKRMV…HKAWEGIKKY (132 aa). Mg(2+) is bound by residues E162, E164, D183, and D185. A DNA-binding site is contributed by E162. DNA is bound by residues G235 and D237. Residue D237 participates in Mg(2+) binding. The interval 340 to 348 is interaction with PCNA; the sequence is TQGRLDQFF. The disordered stretch occupies residues 358–393; sequence NSEASTAGTKRNRGAVALPGVLQRKSSSGHKKAVKK. Basic residues predominate over residues 384–393; it reads SSGHKKAVKK.

It belongs to the XPG/RAD2 endonuclease family. FEN1 subfamily. As to quaternary structure, interacts with PCNA. Three molecules of FEN1 bind to one PCNA trimer with each molecule binding to one PCNA monomer. PCNA stimulates the nuclease activity without altering cleavage specificity. Mg(2+) serves as cofactor. Post-translationally, phosphorylated. Phosphorylation upon DNA damage induces relocalization to the nuclear plasma.

The protein resides in the nucleus. It is found in the nucleolus. It localises to the nucleoplasm. Its subcellular location is the mitochondrion. In terms of biological role, structure-specific nuclease with 5'-flap endonuclease and 5'-3' exonuclease activities involved in DNA replication and repair. During DNA replication, cleaves the 5'-overhanging flap structure that is generated by displacement synthesis when DNA polymerase encounters the 5'-end of a downstream Okazaki fragment. It enters the flap from the 5'-end and then tracks to cleave the flap base, leaving a nick for ligation. Also involved in the long patch base excision repair (LP-BER) pathway, by cleaving within the apurinic/apyrimidinic (AP) site-terminated flap. Acts as a genome stabilization factor that prevents flaps from equilibrating into structures that lead to duplications and deletions. Also possesses 5'-3' exonuclease activity on nicked or gapped double-stranded DNA, and exhibits RNase H activity. Also involved in replication and repair of rDNA and in repairing mitochondrial DNA. The chain is Flap endonuclease 1 from Trypanosoma brucei brucei (strain 927/4 GUTat10.1).